The chain runs to 418 residues: F-box protein At5g03970 (418 aa).

An F-box domain is found at 18-66; the sequence is STHEVLNSNDTMCEILILLPPETIYKLILVSKRWLEIIASPCFRHTYLA.

The chain is F-box protein At5g03970 from Arabidopsis thaliana (Mouse-ear cress).